A 273-amino-acid polypeptide reads, in one-letter code: Formamidopyrimidine-DNA glycosylase (273 aa).

Residue proline 2 is the Schiff-base intermediate with DNA of the active site. The active-site Proton donor is glutamate 3. Residue lysine 59 is the Proton donor; for beta-elimination activity of the active site. DNA is bound by residues histidine 92 and arginine 111. The segment at 239 to 273 adopts an FPG-type zinc-finger fold; that stretch reads KVYGKTDEPCVVCGKPIEKIKLNGRGTHFCPNCQK. Arginine 263 serves as the catalytic Proton donor; for delta-elimination activity.

This sequence belongs to the FPG family. In terms of assembly, monomer. Requires Zn(2+) as cofactor.

The catalysed reaction is Hydrolysis of DNA containing ring-opened 7-methylguanine residues, releasing 2,6-diamino-4-hydroxy-5-(N-methyl)formamidopyrimidine.. The enzyme catalyses 2'-deoxyribonucleotide-(2'-deoxyribose 5'-phosphate)-2'-deoxyribonucleotide-DNA = a 3'-end 2'-deoxyribonucleotide-(2,3-dehydro-2,3-deoxyribose 5'-phosphate)-DNA + a 5'-end 5'-phospho-2'-deoxyribonucleoside-DNA + H(+). Involved in base excision repair of DNA damaged by oxidation or by mutagenic agents. Acts as a DNA glycosylase that recognizes and removes damaged bases. Has a preference for oxidized purines, such as 7,8-dihydro-8-oxoguanine (8-oxoG). Has AP (apurinic/apyrimidinic) lyase activity and introduces nicks in the DNA strand. Cleaves the DNA backbone by beta-delta elimination to generate a single-strand break at the site of the removed base with both 3'- and 5'-phosphates. The protein is Formamidopyrimidine-DNA glycosylase of Listeria monocytogenes serotype 4b (strain F2365).